Here is a 1297-residue protein sequence, read N- to C-terminus: MPVNIKXFNYNDPINNDDIIMMEPFNDPGPGTYYKAFRIIDRIWIVPERFTYGFQPDQFNASTGVFSKDVYEYYDPTYLKTDAEKDKFLKTMIKLFNRINSKPSGQRLLDMIVDAIPYLGNASTPPDKFAANVANVSINKKIIQPGAEDQIKGLMTNLIIFGPGPVLSDNFTDSMIMNGHSPISEGFGARMMIRFCPSCLNVFNNVQENKDTSIFSRRAYFADPALTLMHELIHVLHGLYGIKISNLPITPNTKEFFMQHSDPVQAEELYTFGGHDPSVISPSTDMNIYNKALQNFQDIANRLNIVSSAQGSGIDISLYKQIYKNKYDFVEDPNGKYSVDKDKFDKLYKALMFGFTETNLAGEYGIKTRYSYFSEYLPPIKTEKLLDNTIYTQNEGFNIASKNLKTEFNGQNKAVNKEAYEEISLEHLVIYRIAMCKPVMYKNTGKSEQCIIVNNEDLFFIANKDSFSKDLAKAETIAYNTQNNTIENNFSIDQLILDNDLSSGIDLPNENTEPFTNFDDIDIPVYIKQSALKKIFVDGDSLFEYLHAQTFPSNIENLQLTNSLNDALRNNNKVYTFFSTNLVEKANTVVGASLFVNWVKGVIDDFTSESTQKSTIDKVSDVSIIIPYIGPALNVGNETAKENFKNAFEIGGAAILMEFIPELIVPIVGFFTLESYVGNKGHIIMTISNALKKRDQKWTDMYGLIVSQWLSTVNTQFYTIKERMYNALNNQSQAIEKIIEDQYNRYSEEDKMNINIDFNDIDFKLNQSINLAINNIDDFINQCSISYLMNRMIPLAVKKLKDFDDNLKRDLLEYIDTNELYLLDEVNILKSKVNRHLKDSIPFDLSLYTKDTILIQVFNNYISNISSNAILSLSYRGGRLIDSSGYGATMNVGSDVIFNDIGNGQFKLNNSENSNITAHQSKFVVYDSMFDNFSINFWVRTPKYNNNDIQTYLQNEYTIISCIKNDSGWKVSIKGNRIIWTLIDVNAKSKSIFFEYSIKDNISDYINKWFSITITNDRLGNANIYINGSLKKSEKILNLDRINSSNDIDFKLINCTDTTKFVWIKDFNIFGRELNATEVSSLYWIQSSTNTLKDFWGNPLRYDTQYYLFNQGMQNIYIKYFSKASMGETAPRTNFNNAAINYQNLYLGLRFIIKKASNSRNINNDNIVREGDYIYLNIDNISDESYRVYVLVNSKEIQTQLFLAPINDDPTFYDVLQIKKYYEKTTYNCQILCEKDTKTFGLFGIGKFVKDYGYVWDTYDNYFCISQWYLRRISENINKLRLGCNWQFIPVDEGWTE.

Residue H230 participates in Zn(2+) binding. E231 is a catalytic residue. Zn(2+) contacts are provided by H234 and E268. C436 and C450 are disulfide-bonded. The interval 446-862 (KSEQCIIVNN…ILIQVFNNYI (417 aa)) is translocation domain (TD). Residues 488 to 537 (NNFSIDQLILDNDLSSGIDLPNENTEPFTNFDDIDIPVYIKQSALKKIFV) form a belt region. The segment at 868-1073 (NAILSLSYRG…IKDFNIFGRE (206 aa)) is N-terminus of receptor binding domain (N-RBD). A C-terminus of receptor binding domain (C-RBD) region spans residues 1089–1297 (TNTLKDFWGN…FIPVDEGWTE (209 aa)). The Host ganglioside-binding motif signature appears at 1266 to 1269 (SQWY).

Belongs to the peptidase M27 family. As to quaternary structure, heterodimer; disulfide-linked heterodimer of a light chain (LC) and a heavy chain (HC). The LC has the proteolytic/pharmacological activity, while the N- and C-termini of the HC mediate channel formation and toxin binding, respectively. Interacts with host receptors synaptotagmin-1 and -2 (SYT1 and SYT2). Requires Zn(2+) as cofactor.

The protein resides in the secreted. It is found in the host cytoplasm. The protein localises to the host cytosol. It localises to the host synapse. Its subcellular location is the host presynaptic cell membrane. The protein resides in the host cytoplasmic vesicle. It is found in the host secretory vesicle. The protein localises to the host synaptic vesicle membrane. It catalyses the reaction Limited hydrolysis of proteins of the neuroexocytosis apparatus, synaptobrevins, SNAP25 or syntaxin. No detected action on small molecule substrates.. Functionally, botulinum toxin causes flaccid paralysis by inhibiting neurotransmitter (acetylcholine) release from the presynaptic membranes of nerve terminals of the eukaryotic host skeletal and autonomic nervous system, with frequent heart or respiratory failure. Precursor of botulinum neurotoxin G which has 2 coreceptors; complex polysialylated gangliosides found on neural tissue and specific membrane-anchored proteins found in synaptic vesicles. Receptor proteins are exposed on host presynaptic cell membrane during neurotransmitter release, when the toxin heavy chain (HC) binds to them. Upon synaptic vesicle recycling the toxin is taken up via the endocytic pathway. When the pH of the toxin-containing endosome drops a structural rearrangement occurs so that the N-terminus of the HC forms pores that allows the light chain (LC) to translocate into the cytosol. Once in the cytosol the disulfide bond linking the 2 subunits is reduced and LC cleaves its target protein on synaptic vesicles, preventing their fusion with the cytoplasmic membrane and thus neurotransmitter release. Binds to host peripheral neuronal presynaptic membranes via synaptotagmins 1 and 2 (SYT1 and SYT2). Toxin binds to the membrane proximal extra-cytoplasmic region of SYT1 and SYT2 that is transiently exposed outside of cells during exocytosis; exogenous gangliosides do not enhance binding and subsequent uptake of toxin into host cells. Toxin activity can be blocked by the appropriate synaptotagmin protein fragments in cell culture. Its function is as follows. Has proteolytic activity. After translocation into the eukaryotic host cytosol acts as a zinc endopeptidase that cleaves synaptobrevins-1, -2 and -3 (also called VAMP1, VAMP2 and VAMP3). Hydrolyzes the '81-Ala-|-Ala-82' bond of VAMP2, and probably also the equivalent 'Ala-|-Ala' sites in VAMP1 and VAMP3. Has low activity on A.californica synaptobrevin and none on D.melanogaster synaptobrevin or cellubrevin, have a slightly different sequence. Responsible for host cell targeting and translocation of light chain (LC) into host cytosol. Composed of 3 subdomains; the translocation domain (TD), and N-terminus and C-terminus of the receptor-binding domain (N-RBD, C-RBD). The RBD is responsible for the adherence of the toxin to the cell surface. It simultaneously recognizes 2 coreceptors; polysialated gangliosides and the receptor proteins SYT1 and SYT2 in close proximity on host synaptic vesicles. The N-terminus of the TD wraps an extended belt around the perimeter of the LC, protecting Zn(2+) in the active site; it may also prevent premature LC dissociation from the translocation channel and protect toxin prior to translocation. The TD inserts into synaptic vesicle membrane to allow translocation into the host cytosol. Has 2 coreceptors; complex gangliosides found primarily on neural tissue and host synaptotagmin-1 and -2 (SYT1 and SYT2) which bind to separate sites at the tip of the HC. HC alone binds to host receptors SYT1 and SYT2; C-RBD interacts with host SYT2. Has equal affinity for SYT1 and SYT2; gangliosides are not required for (or only very slightly improve) binding to a membrane-anchored receptor fragment. Has also been shown to only bind SYT1; the assay methods were different. Binds ganglioside GT1b. Significantly decreases uptake and toxicity of whole BoNT/B and BoNT/G. This chain is Botulinum neurotoxin type G (botG), found in Clostridium botulinum.